The primary structure comprises 273 residues: Putative methyltransferase Cher3 (273 aa).

Residues 1 to 273 enclose the CheR-type methyltransferase domain; sequence MTSERNTDIE…VKPQRIFRKS (273 aa). S-adenosyl-L-methionine contacts are provided by residues S76, R80, E114, D137, 199–200, and 215–216; these read SL and RN.

The chain is Putative methyltransferase Cher3 (cheR3) from Pseudomonas putida (strain ATCC 47054 / DSM 6125 / CFBP 8728 / NCIMB 11950 / KT2440).